Consider the following 497-residue polypeptide: Phenylalanine--tRNA ligase alpha subunit (497 aa).

Residues Thr-329, 372–374 (QIE), and Tyr-412 each bind L-phenylalanine. Glu-414 contributes to the Mg(2+) binding site. Phe-438 contacts L-phenylalanine.

This sequence belongs to the class-II aminoacyl-tRNA synthetase family. Phe-tRNA synthetase alpha subunit type 2 subfamily. Heterotetramer; dimer of two heterodimers formed by alpha and beta subunits. Mg(2+) is required as a cofactor.

It is found in the cytoplasm. The catalysed reaction is tRNA(Phe) + L-phenylalanine + ATP = L-phenylalanyl-tRNA(Phe) + AMP + diphosphate + H(+). The protein is Phenylalanine--tRNA ligase alpha subunit (farsa) of Danio rerio (Zebrafish).